The primary structure comprises 127 residues: Snaclec bothroinsularin subunit beta (127 aa).

3 disulfides stabilise this stretch: C2–C13, C30–C123, and C100–C115. The 116-residue stretch at 9-124 folds into the C-type lectin domain; the sequence is YEGSCYRVFE…CTKLEYFVCE (116 aa).

Belongs to the snaclec family. Heterodimer of subunits alpha and beta; disulfide-linked. Expressed by the venom gland.

Its subcellular location is the secreted. Thrombin and prothrombin (F2) inhibitor. The IC(50) of thrombin-induced platelet aggregation and fibrinocoagulation is 62 and 35 nM, respectively. Its inhibitory activity is at least 10-fold lower than that observed for other thrombin inhibitors. The chain is Snaclec bothroinsularin subunit beta from Bothrops insularis (Golden lancehead).